An 87-amino-acid chain; its full sequence is Putative phytosulfokines 4 (87 aa).

Positions 1–23 are cleaved as a signal peptide; that stretch reads MANLSTLITIALLLCATMLTCSA. A propeptide spanning residues 24 to 77 is cleaved from the precursor; that stretch reads RPEPAYFASFTTSPADTLSLEMIESKLHEVAGESCDKEDDEDCLVRRTLTAHLD. Tyrosine 78 and tyrosine 80 each carry sulfotyrosine. The propeptide occupies 83–87; the sequence is KNNHH.

It belongs to the phytosulfokine family. In terms of processing, sulfation is important for activity and for the binding to a putative membrane receptor.

The protein localises to the secreted. Its function is as follows. Promotes plant cell differentiation, organogenesis and somatic embryogenesis as well as cell proliferation. The protein is Putative phytosulfokines 4 (PSK4) of Arabidopsis thaliana (Mouse-ear cress).